Here is a 318-residue protein sequence, read N- to C-terminus: Dehydration-responsive element-binding protein 2E (318 aa).

Positions 1-15 (MESYGRKRAWKKGPT) are enriched in basic residues. Positions 1-24 (MESYGRKRAWKKGPTRGKGGPQNA) are disordered. A DNA-binding region (AP2/ERF) is located at residues 27–84 (EYRGVRQRTWGKWVAEIREPNKRTRLWLGSFATAEEAALAYDEAARRLYGPDAFLNLP). Positions 140-178 (ELKNSSSSPTKPPPRTPTRANPPPPPLPTSSPCSTVTNS) are disordered. The span at 149–168 (TKPPPRTPTRANPPPPPLPT) shows a compositional bias: pro residues.

The protein belongs to the AP2/ERF transcription factor family. ERF subfamily.

It localises to the nucleus. Probable transcriptional activator that binds to the DNA sequence 5'-[AG]CCGAC-3' of the cis-acting dehydration-responsive element (DRE). This Oryza sativa subsp. japonica (Rice) protein is Dehydration-responsive element-binding protein 2E (DREB2E).